The following is a 600-amino-acid chain: Proline--tRNA ligase (600 aa).

The protein belongs to the class-II aminoacyl-tRNA synthetase family. ProS type 1 subfamily. As to quaternary structure, homodimer.

It is found in the cytoplasm. The enzyme catalyses tRNA(Pro) + L-proline + ATP = L-prolyl-tRNA(Pro) + AMP + diphosphate. In terms of biological role, catalyzes the attachment of proline to tRNA(Pro) in a two-step reaction: proline is first activated by ATP to form Pro-AMP and then transferred to the acceptor end of tRNA(Pro). As ProRS can inadvertently accommodate and process non-cognate amino acids such as alanine and cysteine, to avoid such errors it has two additional distinct editing activities against alanine. One activity is designated as 'pretransfer' editing and involves the tRNA(Pro)-independent hydrolysis of activated Ala-AMP. The other activity is designated 'posttransfer' editing and involves deacylation of mischarged Ala-tRNA(Pro). The misacylated Cys-tRNA(Pro) is not edited by ProRS. The polypeptide is Proline--tRNA ligase (Prochlorococcus marinus subsp. pastoris (strain CCMP1986 / NIES-2087 / MED4)).